Reading from the N-terminus, the 412-residue chain is Divalent metal cation transporter MntH (412 aa).

11 helical membrane-spanning segments follow: residues 19-39 (LALM…GNFA), 46-66 (ASFG…AMLI), 94-114 (VWFY…AEFI), 122-142 (LILG…TFLI), 156-176 (VIGG…IFSQ), 196-216 (AVFL…IYLH), 241-261 (IAMT…AAAF), 290-310 (VFGL…TLAG), 329-349 (TITM…TRIL), 350-370 (VMSQ…LLIF), and 389-409 (IGWM…VGTA).

Belongs to the NRAMP family.

It is found in the cell inner membrane. Functionally, h(+)-stimulated, divalent metal cation uptake system. This is Divalent metal cation transporter MntH from Citrobacter koseri (strain ATCC BAA-895 / CDC 4225-83 / SGSC4696).